We begin with the raw amino-acid sequence, 859 residues long: Protein FAM171A1 (859 aa).

Positions 1 to 20 (MSGSTAVALLFCVLSCSVWG) are cleaved as a signal peptide. Topologically, residues 21–307 (AGSKASHEHN…VTQDITSYHT (287 aa)) are extracellular. N-linked (GlcNAc...) asparagine glycosylation is found at N163, N194, and N198. The chain crosses the membrane as a helical span at residues 308–328 (IFLLAILGGIAFILLVLLCIL). The Cytoplasmic portion of the chain corresponds to 329 to 859 (LYYCRRKCLK…ERPLLAFNKK (531 aa)). Disordered stretches follow at residues 397–421 (SRDFGSREELLSHQEEKSRMSLDNL), 484–509 (TNHVTAGSKPNIQEQMHPVPSAPEPE), and 771–859 (QSPS…FNKK). Basic and acidic residues predominate over residues 400 to 416 (FGSREELLSHQEEKSRM). 2 stretches are compositionally biased toward polar residues: residues 484–497 (TNHVTAGSKPNIQE) and 797–806 (SGSQTPSLQE). Over residues 838-852 (GENKKSPWQKREERP) the composition is skewed to basic and acidic residues.

It belongs to the FAM171 family.

Its subcellular location is the cell membrane. May be involved in the regulation of the cytoskeletal dynamics, plays a role in actin stress fiber formation. The sequence is that of Protein FAM171A1 (fam171a1) from Xenopus laevis (African clawed frog).